Reading from the N-terminus, the 94-residue chain is MRAVYILAMACAATLQASSSALPSTKDLNSQVESLVPSDITDSAHVGGVRLLRVEDKEEETEEERGFGGALADGLKKLNPAKAAKKAKEKSCEN.

The signal sequence occupies residues 1–21 (MRAVYILAMACAATLQASSSA). The RxLR-dEER motif lies at 50–65 (RLLRVEDKEEETEEER).

Belongs to the RxLR effector family.

It localises to the secreted. It is found in the host cytoplasm. Its subcellular location is the host nucleus. Functionally, effector that enhances P.infestans colonization of Nicotiana benthamiana leaves. This is RxLR effector protein PITG_15972 from Phytophthora infestans (strain T30-4) (Potato late blight agent).